The following is a 349-amino-acid chain: Signal peptidase I (349 aa).

The next 2 membrane-spanning stretches (helical) occupy residues 3–23 (NLFFVILLAVGFGVWKVLDYF) and 25–45 (LPNTFSILLLILTALSGVLWC). Over 46–80 (YHRFVVLPKRHRQVARAEQRSGKTLSEEEKAKIEP) the chain is Cytoplasmic. The helical transmembrane segment at 81 to 101 (ISEASEFLSSLFPVLAVVFLV) threads the bilayer. Residues 102–349 (RSFLFEPFQI…RFERFFTAIK (248 aa)) lie on the Periplasmic side of the membrane. Active-site residues include S115 and K196.

The protein belongs to the peptidase S26 family.

The protein resides in the cell inner membrane. The catalysed reaction is Cleavage of hydrophobic, N-terminal signal or leader sequences from secreted and periplasmic proteins.. This is Signal peptidase I (lepB) from Haemophilus influenzae (strain ATCC 51907 / DSM 11121 / KW20 / Rd).